The following is a 297-amino-acid chain: 6-dehydroglucose reductase (297 aa).

Residues W20, R21, and D49 each contribute to the NADP(+) site. The active-site Proton donor is the Y54. 4 residues coordinate D-glucose: Y54, K98, H129, and R130. NADP(+)-binding residues include S159, N160, Q181, S211, L213, G215, G261, T262, N263, and R267.

It belongs to the aldo/keto reductase family. In terms of assembly, homotrimer.

The enzyme catalyses D-glucose + NADP(+) = 6-dehydro-D-glucose + NADPH + H(+). In terms of biological role, part of the sulfoquinovose monooxygenase (sulfo-SMO) pathway, a D-sulfoquinovose degradation pathway that enables the complete utilization of all carbons within sulfoquinovose (SQ) with concomitant production of inorganic sulfite. Catalyzes the NADP-dependent reduction of 6-dehydro-D-glucose to D-glucose. Cannot use NADH. The polypeptide is 6-dehydroglucose reductase (Agrobacterium fabrum (strain C58 / ATCC 33970) (Agrobacterium tumefaciens (strain C58))).